Reading from the N-terminus, the 147-residue chain is Small ribosomal subunit protein bS6m (147 aa).

This sequence belongs to the bacterial ribosomal protein bS6 family. As to quaternary structure, component of the mitochondrial ribosome small subunit (28S) which comprises a 12S rRNA and about 30 distinct proteins.

Its subcellular location is the mitochondrion. The chain is Small ribosomal subunit protein bS6m (mRpS6) from Drosophila melanogaster (Fruit fly).